Here is a 447-residue protein sequence, read N- to C-terminus: Acid phosphatase (447 aa).

Positions 1-17 (MKPSVATLLATVSLVYA) are cleaved as a signal peptide. 5 N-linked (GlcNAc...) asparagine glycosylation sites follow: Asn-119, Asn-150, Asn-177, Asn-186, and Asn-208. Asp-215 (proton donor) is an active-site residue. N-linked (GlcNAc...) asparagine glycosylation is found at Asn-217, Asn-234, Asn-240, Asn-315, Asn-332, Asn-382, and Asn-405. A lipid anchor (GPI-like-anchor amidated serine) is attached at Ser-419. Positions 420-447 (ASSNAAVSAVAPAAGVSGLLLGLALNLL) are cleaved as a propeptide — removed in mature form.

In terms of processing, the GPI-like anchor contains a phosphoceramide lipid group. The anchor position has not been determined.

The protein localises to the cell membrane. It catalyses the reaction a phosphate monoester + H2O = an alcohol + phosphate. With respect to regulation, inhibited by NaF, molybdate and vanadate. Functionally, has both phosphomonoesterase and phosphodiesterase activity. Cleaves a broad range of phosphate esters. The protein is Acid phosphatase (phoA) of Aspergillus fumigatus (strain ATCC MYA-4609 / CBS 101355 / FGSC A1100 / Af293) (Neosartorya fumigata).